The sequence spans 350 residues: Dihydroorotase (350 aa).

Histidine 17 and histidine 19 together coordinate Zn(2+). Substrate is bound by residues 19-21 (HLR) and asparagine 45. Residues lysine 103, histidine 140, and histidine 178 each contribute to the Zn(2+) site. Lysine 103 carries the post-translational modification N6-carboxylysine. Histidine 140 contacts substrate. Substrate is bound at residue leucine 224. Aspartate 252 contacts Zn(2+). Residue aspartate 252 is part of the active site. Residues histidine 256 and alanine 268 each coordinate substrate.

It belongs to the metallo-dependent hydrolases superfamily. DHOase family. Class II DHOase subfamily. As to quaternary structure, homodimer. Zn(2+) serves as cofactor.

The enzyme catalyses (S)-dihydroorotate + H2O = N-carbamoyl-L-aspartate + H(+). It participates in pyrimidine metabolism; UMP biosynthesis via de novo pathway; (S)-dihydroorotate from bicarbonate: step 3/3. In terms of biological role, catalyzes the reversible cyclization of carbamoyl aspartate to dihydroorotate. This chain is Dihydroorotase, found in Buchnera aphidicola subsp. Acyrthosiphon pisum (strain APS) (Acyrthosiphon pisum symbiotic bacterium).